A 465-amino-acid chain; its full sequence is Glutamate--tRNA ligase (465 aa).

Residues 8–18 carry the 'HIGH' region motif; the sequence is PSPTGDLHIGG. Residues 235–239 carry the 'KMSKS' region motif; the sequence is RLSKR. K238 is a binding site for ATP.

It belongs to the class-I aminoacyl-tRNA synthetase family. Glutamate--tRNA ligase type 1 subfamily. In terms of assembly, monomer.

It localises to the cytoplasm. The catalysed reaction is tRNA(Glu) + L-glutamate + ATP = L-glutamyl-tRNA(Glu) + AMP + diphosphate. Functionally, catalyzes the attachment of glutamate to tRNA(Glu) in a two-step reaction: glutamate is first activated by ATP to form Glu-AMP and then transferred to the acceptor end of tRNA(Glu). This is Glutamate--tRNA ligase from Dichelobacter nodosus (strain VCS1703A).